Reading from the N-terminus, the 339-residue chain is UDP-N-acetylglucosamine--N-acetylmuramyl-(pentapeptide) pyrophosphoryl-undecaprenol N-acetylglucosamine transferase (339 aa).

UDP-N-acetyl-alpha-D-glucosamine-binding positions include 11 to 13 (TGG), asparagine 127, arginine 170, serine 188, isoleucine 235, and glutamine 280.

The protein belongs to the glycosyltransferase 28 family. MurG subfamily.

It localises to the cell inner membrane. It carries out the reaction di-trans,octa-cis-undecaprenyl diphospho-N-acetyl-alpha-D-muramoyl-L-alanyl-D-glutamyl-meso-2,6-diaminopimeloyl-D-alanyl-D-alanine + UDP-N-acetyl-alpha-D-glucosamine = di-trans,octa-cis-undecaprenyl diphospho-[N-acetyl-alpha-D-glucosaminyl-(1-&gt;4)]-N-acetyl-alpha-D-muramoyl-L-alanyl-D-glutamyl-meso-2,6-diaminopimeloyl-D-alanyl-D-alanine + UDP + H(+). Its pathway is cell wall biogenesis; peptidoglycan biosynthesis. Its function is as follows. Cell wall formation. Catalyzes the transfer of a GlcNAc subunit on undecaprenyl-pyrophosphoryl-MurNAc-pentapeptide (lipid intermediate I) to form undecaprenyl-pyrophosphoryl-MurNAc-(pentapeptide)GlcNAc (lipid intermediate II). In Thermotoga petrophila (strain ATCC BAA-488 / DSM 13995 / JCM 10881 / RKU-1), this protein is UDP-N-acetylglucosamine--N-acetylmuramyl-(pentapeptide) pyrophosphoryl-undecaprenol N-acetylglucosamine transferase.